The chain runs to 337 residues: Putative 2-aminoethylphosphonate-binding periplasmic protein (337 aa).

The first 21 residues, 1-21 (MKLSRLALLSVFALASAPSWA), serve as a signal peptide directing secretion.

Belongs to the bacterial solute-binding protein 1 family.

Its subcellular location is the periplasm. Functionally, probably part of the PhnSTUV complex (TC 3.A.1.11.5) involved in 2-aminoethylphosphonate import. This Salmonella paratyphi A (strain ATCC 9150 / SARB42) protein is Putative 2-aminoethylphosphonate-binding periplasmic protein (phnS).